The following is a 266-amino-acid chain: 15-hydroxyprostaglandin dehydrogenase [NAD(+)] (266 aa).

NAD(+)-binding positions include 12–20, 36–37, 63–65, and asparagine 91; these read GAAQGIGRA, DW, and CDV. Substrate-binding residues include serine 138 and glutamine 148. Tyrosine 151 functions as the Proton acceptor in the catalytic mechanism. Residues 151-155 and 186-188 each bind NAD(+); these read YCASK and VDT.

The protein belongs to the short-chain dehydrogenases/reductases (SDR) family. As to quaternary structure, homodimer.

It is found in the cytoplasm. It catalyses the reaction prostaglandin E2 + NAD(+) = 15-oxoprostaglandin E2 + NADH + H(+). The catalysed reaction is (15S)-hydroxy-(5Z,8Z,11Z,13E)-eicosatetraenoate + NAD(+) = 15-oxo-(5Z,8Z,11Z,13E)-eicosatetraenoate + NADH + H(+). The enzyme catalyses (11R)-hydroxy-(5Z,8Z,12E,14Z)-eicosatetraenoate + NAD(+) = 11-oxo-(5Z,8Z,12E,14Z)-eicosatetraenoate + NADH + H(+). It carries out the reaction lipoxin A4 + NAD(+) = 15-oxo-(5S,6R)-dihydroxy-(7E,9E,11Z,13E)-eicosatetraenoate + NADH + H(+). It catalyses the reaction 15-oxo-(5S,6R)-dihydroxy-(7E,9E,11Z)-eicosatrienoate + NADH + H(+) = (5S,6R,15S)-trihydroxy-(7E,9E,11Z)-eicosatrienoate + NAD(+). The catalysed reaction is prostaglandin A1 + NAD(+) = 15-oxo-prostaglandin A1 + NADH + H(+). The enzyme catalyses prostaglandin E1 + NAD(+) = 15-oxoprostaglandin E1 + NADH + H(+). It carries out the reaction 14-hydroxy-(4Z,7Z,10Z,12E,16Z,19Z)-docosahexaenoate + NAD(+) = 14-oxo-(4Z,7Z,10Z,12E,16Z,19Z)-docosahexaenoate + NADH + H(+). It catalyses the reaction resolvin E1 + NAD(+) = 18-oxo-resolvin E1 + NADH + H(+). The catalysed reaction is resolvin D1 + NAD(+) = 8-oxoresolvin D1 + NADH + H(+). The enzyme catalyses resolvin D1 + NAD(+) = 17-oxoresolvin D1 + NADH + H(+). It carries out the reaction resolvin D2 + NAD(+) = 7-oxoresolvin D2 + NADH + H(+). It catalyses the reaction resolvin D2 + NAD(+) = 16-oxoresolvin D2 + NADH + H(+). Catalyzes the NAD-dependent dehydrogenation (oxidation) of a broad array of hydroxylated polyunsaturated fatty acids (mainly eicosanoids and docosanoids, including prostaglandins, lipoxins and resolvins), yielding their corresponding keto (oxo) metabolites. Decreases the levels of the pro-proliferative prostaglandins such as prostaglandin E2 (whose activity is increased in cancer because of an increase in the expression of cyclooxygenase 2) and generates oxo-fatty acid products that can profoundly influence cell function by abrogating pro-inflammatory cytokine expression. Converts resolvins E1, D1 and D2 to their oxo products, which represents a mode of resolvin inactivation. Resolvin E1 plays important roles during the resolution phase of acute inflammation, while resolvins D1 and D2 have a unique role in obesity-induced adipose inflammation. In Bos taurus (Bovine), this protein is 15-hydroxyprostaglandin dehydrogenase [NAD(+)] (HPGD).